The following is a 218-amino-acid chain: MDFTNERRAMIDLLIRRGISDQRVLDAMAQTPRHVFVPAHERSHAYSDQALPIGEGQTISQPYMVALMIEALQLAPTDRVLEIGAGSGYAAAVLSRIVAKVHTIECREALAASAAALLRTLGYDNVTVHVGDGTQGLPDYAPFDAILVSAASPWVPAPLREQLASSGRLVIPVGGRQAQILLRLRRTGDTLRTERLCDVRFVPLIGGHAWTTEHYPER.

Serine 60 is a catalytic residue.

This sequence belongs to the methyltransferase superfamily. L-isoaspartyl/D-aspartyl protein methyltransferase family.

It is found in the cytoplasm. The enzyme catalyses [protein]-L-isoaspartate + S-adenosyl-L-methionine = [protein]-L-isoaspartate alpha-methyl ester + S-adenosyl-L-homocysteine. Catalyzes the methyl esterification of L-isoaspartyl residues in peptides and proteins that result from spontaneous decomposition of normal L-aspartyl and L-asparaginyl residues. It plays a role in the repair and/or degradation of damaged proteins. In Roseiflexus castenholzii (strain DSM 13941 / HLO8), this protein is Protein-L-isoaspartate O-methyltransferase.